Here is a 123-residue protein sequence, read N- to C-terminus: Large ribosomal subunit protein bL21 (123 aa).

Belongs to the bacterial ribosomal protein bL21 family. In terms of assembly, part of the 50S ribosomal subunit. Contacts protein L20.

Functionally, this protein binds to 23S rRNA in the presence of protein L20. The chain is Large ribosomal subunit protein bL21 from Rhizobium meliloti (strain 1021) (Ensifer meliloti).